The sequence spans 126 residues: Small ribosomal subunit protein eS6 (126 aa).

The protein belongs to the eukaryotic ribosomal protein eS6 family.

The chain is Small ribosomal subunit protein eS6 from Methanothermobacter thermautotrophicus (strain ATCC 29096 / DSM 1053 / JCM 10044 / NBRC 100330 / Delta H) (Methanobacterium thermoautotrophicum).